The sequence spans 901 residues: DNA mismatch repair protein MutS (901 aa).

Over residues 1-12 (MKYSASTSTPKS) the composition is skewed to polar residues. A disordered region spans residues 1-25 (MKYSASTSTPKSAQPKEEELENSLP). Residue 679-686 (GPNASGKS) coordinates ATP.

The protein belongs to the DNA mismatch repair MutS family.

This protein is involved in the repair of mismatches in DNA. It is possible that it carries out the mismatch recognition step. This protein has a weak ATPase activity. The chain is DNA mismatch repair protein MutS from Trichodesmium erythraeum (strain IMS101).